Here is a 936-residue protein sequence, read N- to C-terminus: Periplasmic nitrate reductase (936 aa).

A signal peptide (tat-type signal) is located at residues 1–31; it reads MALSRRDFLKSSAAAAAASAVGLSVPKEVEA. Positions 40–96 constitute a 4Fe-4S Mo/W bis-MGD-type domain; it reads WRWDKAVCRFCGTGCGIMIATKDDRIVAVKGDPLAPVNRGLNCIKGYFTAKIMYGAD. [4Fe-4S] cluster contacts are provided by C47, C50, C54, and C82. Mo-bis(molybdopterin guanine dinucleotide) contacts are provided by residues K84, Q152, N177, C181, 214–221, 246–250, M424, Q428, N534, 559–560, K582, D609, and 826–835; these read WGSNMAEM, STYTH, SD, and TGRVLEHWHS. W902 is a substrate binding site. Positions 910 and 927 each coordinate Mo-bis(molybdopterin guanine dinucleotide).

This sequence belongs to the prokaryotic molybdopterin-containing oxidoreductase family. NasA/NapA/NarB subfamily. As to quaternary structure, component of the periplasmic nitrate reductase NapAB complex composed of NapA and NapB. [4Fe-4S] cluster is required as a cofactor. Mo-bis(molybdopterin guanine dinucleotide) serves as cofactor. Post-translationally, predicted to be exported by the Tat system. The position of the signal peptide cleavage has not been experimentally proven.

It localises to the periplasm. The enzyme catalyses 2 Fe(II)-[cytochrome] + nitrate + 2 H(+) = 2 Fe(III)-[cytochrome] + nitrite + H2O. Catalytic subunit of the periplasmic nitrate reductase complex NapAB. Receives electrons from NapB and catalyzes the reduction of nitrate to nitrite. The protein is Periplasmic nitrate reductase of Nitratiruptor sp. (strain SB155-2).